Reading from the N-terminus, the 278-residue chain is Orotidine 5'-phosphate decarboxylase (278 aa).

Catalysis depends on Lys95, which acts as the Proton donor.

Belongs to the OMP decarboxylase family. Type 2 subfamily.

The enzyme catalyses orotidine 5'-phosphate + H(+) = UMP + CO2. The protein operates within pyrimidine metabolism; UMP biosynthesis via de novo pathway; UMP from orotate: step 2/2. The sequence is that of Orotidine 5'-phosphate decarboxylase from Corynebacterium glutamicum (strain R).